The primary structure comprises 381 residues: Chaperone protein DnaJ (381 aa).

A J domain is found at 4–69; it reads DYYEILGVTR…QKRAAYDRFG (66 aa). The CR-type zinc finger occupies 135-213; it reads GKTAQINIPS…CQGTRRVEKN (79 aa). 8 residues coordinate Zn(2+): Cys148, Cys151, Cys165, Cys168, Cys187, Cys190, Cys201, and Cys204. CXXCXGXG motif repeat units lie at residues 148–155, 165–172, 187–194, and 201–208; these read CDACEGSG, CGTCHGAG, CPVCHGRG, and CPKCQGTR.

This sequence belongs to the DnaJ family. As to quaternary structure, homodimer. It depends on Zn(2+) as a cofactor.

It localises to the cytoplasm. In terms of biological role, participates actively in the response to hyperosmotic and heat shock by preventing the aggregation of stress-denatured proteins and by disaggregating proteins, also in an autonomous, DnaK-independent fashion. Unfolded proteins bind initially to DnaJ; upon interaction with the DnaJ-bound protein, DnaK hydrolyzes its bound ATP, resulting in the formation of a stable complex. GrpE releases ADP from DnaK; ATP binding to DnaK triggers the release of the substrate protein, thus completing the reaction cycle. Several rounds of ATP-dependent interactions between DnaJ, DnaK and GrpE are required for fully efficient folding. Also involved, together with DnaK and GrpE, in the DNA replication of plasmids through activation of initiation proteins. This is Chaperone protein DnaJ from Bartonella henselae (strain ATCC 49882 / DSM 28221 / CCUG 30454 / Houston 1) (Rochalimaea henselae).